The following is a 232-amino-acid chain: Ureidoacrylate amidohydrolase RutB (232 aa).

Catalysis depends on Asp26, which acts as the Proton acceptor. Residue Lys135 is part of the active site. Catalysis depends on Cys168, which acts as the Nucleophile.

It belongs to the isochorismatase family. RutB subfamily.

The enzyme catalyses (Z)-3-ureidoacrylate + H2O + H(+) = (Z)-3-aminoacrylate + NH4(+) + CO2. It carries out the reaction (Z)-3-ureidoacrylate + H2O = (Z)-3-aminoacrylate + carbamate + H(+). It catalyses the reaction (Z)-2-methylureidoacrylate + H2O + H(+) = (Z)-2-methylaminoacrylate + NH4(+) + CO2. In terms of biological role, hydrolyzes ureidoacrylate to form aminoacrylate and carbamate. The carbamate hydrolyzes spontaneously, thereby releasing one of the nitrogen atoms of the pyrimidine ring as ammonia and one of its carbon atoms as CO2. The chain is Ureidoacrylate amidohydrolase RutB from Cronobacter sakazakii (strain ATCC BAA-894) (Enterobacter sakazakii).